The following is a 290-amino-acid chain: L-proline cis-3-hydroxylase 2 (290 aa).

His107, Asp109, and His158 together coordinate Fe cation. Position 168 (Arg168) interacts with 2-oxoglutarate.

It belongs to the L-proline cis-4-/cis-3-hydroxylase family. In terms of assembly, homodimer. Requires Fe(2+) as cofactor.

It catalyses the reaction L-proline + 2-oxoglutarate + O2 = cis-3-hydroxy-L-proline + succinate + CO2. Inhibited by metal ions such as Co(2+), Zn(2+), Ni(2+) or Cu(2+). Is also inhibited by EDTA in vitro. Functionally, dioxygenase that catalyzes the 2-oxoglutarate-dependent selective hydroxylation of free L-proline to cis-3-hydroxy-L-proline (cis-3-Hyp). This chain is L-proline cis-3-hydroxylase 2, found in Streptomyces sp.